Here is a 224-residue protein sequence, read N- to C-terminus: Envelope glycoprotein L (224 aa).

Residues 1-19 (MGILGWVGLIAVGVLCVRG) form the signal peptide. Residues 20–161 (GLPSTEYVIR…FDYSRTRRCV (142 aa)) form an interaction with gH region. The gL alphaherpesvirus-type domain occupies 23 to 201 (STEYVIRSRV…LTTPPPIIAT (179 aa)). 2 disulfides stabilise this stretch: C44/C76 and C149/C160. The disordered stretch occupies residues 161–224 (VGRQDLGPTN…RRRRPHSRRL (64 aa)). Basic residues predominate over residues 213 to 224 (KSRRRRPHSRRL).

It belongs to the herpesviridae glycoprotein L (gL) family. Alphaherpesvirinae gL subfamily. Interacts with glycoprotein H (gH); this interaction is necessary for the correct processing and cell surface expression of gH. The heterodimer gH/gL seems to interact with gB trimers during fusion.

It is found in the virion membrane. The protein localises to the host cell membrane. Its subcellular location is the host Golgi apparatus. The protein resides in the host trans-Golgi network. Functionally, the heterodimer glycoprotein H-glycoprotein L is required for the fusion of viral and plasma membranes leading to virus entry into the host cell. Acts as a functional inhibitor of gH and maintains gH in an inhibited form. Upon binding to host integrins, gL dissociates from gH leading to activation of the viral fusion glycoproteins gB and gH. This Human herpesvirus 1 (strain 17) (HHV-1) protein is Envelope glycoprotein L.